Consider the following 662-residue polypeptide: Glycogen debranching enzyme (662 aa).

D338 functions as the Nucleophile in the catalytic mechanism. Catalysis depends on E373, which acts as the Proton donor.

This sequence belongs to the glycosyl hydrolase 13 family.

The catalysed reaction is Hydrolysis of (1-&gt;6)-alpha-D-glucosidic linkages to branches with degrees of polymerization of three or four glucose residues in limit dextrin.. It functions in the pathway glycan degradation; glycogen degradation. Its function is as follows. Removes maltotriose and maltotetraose chains that are attached by 1,6-alpha-linkage to the limit dextrin main chain, generating a debranched limit dextrin. The polypeptide is Glycogen debranching enzyme (Yersinia enterocolitica serotype O:8 / biotype 1B (strain NCTC 13174 / 8081)).